A 308-amino-acid chain; its full sequence is MTNIEDKDWSRSEGDSWDIVSSVGFTALGVAAARAVENREADPLVRDPYAEHFVRAAGEPHLIGLLDSSEPKPPNPGTAPRHIGLRSKFFDEFFINATNSGCKQAVILAAGLDVRAHRLPWPAGTKVFELDQPQVLEFKDRVLAEHDATPTSDRREIAVDLRDDWPAALLAAGFDPEVPTAWSAEGLIIYLPSAAQDLLFERVVALSAPGSQVAVEATRGRPDIAKWGEMQKKYADEGHPMSKVDITTLFYDEERADVAEWLAARGWKVQGSHALELAAAYGVEIPELPEDVVEVVKQGNYVTAVLPS.

S-adenosyl-L-methionine-binding positions include Asp-131 and 160 to 161; that span reads DL.

It belongs to the UPF0677 family.

Its function is as follows. Exhibits S-adenosyl-L-methionine-dependent methyltransferase activity. In Mycobacteroides abscessus (strain ATCC 19977 / DSM 44196 / CCUG 20993 / CIP 104536 / JCM 13569 / NCTC 13031 / TMC 1543 / L948) (Mycobacterium abscessus), this protein is Putative S-adenosyl-L-methionine-dependent methyltransferase MAB_4584c.